We begin with the raw amino-acid sequence, 215 residues long: Large ribosomal subunit protein uL3 (215 aa).

An N5-methylglutamine modification is found at Q151.

The protein belongs to the universal ribosomal protein uL3 family. In terms of assembly, part of the 50S ribosomal subunit. Forms a cluster with proteins L14 and L19. Methylated by PrmB.

In terms of biological role, one of the primary rRNA binding proteins, it binds directly near the 3'-end of the 23S rRNA, where it nucleates assembly of the 50S subunit. This is Large ribosomal subunit protein uL3 from Rickettsia massiliae (strain Mtu5).